The following is a 246-amino-acid chain: MADS-box protein EJ2 (246 aa).

The MADS-box domain maps to 1 to 61 (MGRGRVELKR…GKLYEFCSTS (61 aa)). Residues 87 to 177 (TQNNYHEYLR…RRKLEESVAG (91 aa)) form the K-box domain.

The protein localises to the nucleus. Its function is as follows. MADS-box transcription factor that acts redundantly with J2 to control meristem maturation and inflorescence architecture. The chain is MADS-box protein EJ2 from Solanum lycopersicum (Tomato).